The primary structure comprises 676 residues: MENDQFTEKQQQVTTSPTQDNQGQSKAEPVPVSQPLSPTNQTSAQPEMATCDISEELNRQLEDIIKTYGSAASLVEKEGTTAETDKPEKEDVGSMEDAECEDVNEESEKDKPAPGDASRAKEPSASKEQKLEKKILKGLGKEATLLMQSLNKLTTPEEKLDLLFKKYAELLEEHRAEQKQLKYLQKRQAQITKEKDQLQSEHSRAILARSKLESLCRELQRHNKTLKEETIQRAREEDEKRKEITNHFQGTLSEIQAQIEQQSERNMKLCQENTELAEKLKSIIDQYELREEHLDKIFKHRELQQKLVDAKLEQSQEMMKEAEERHQKEKEYLLNQAAEWKLQAKMLKEQETVLQAQITLYSERFEEFQKTLTKSNEVFATFKQEMEKMTKKMKKLEKDTATWKSRFENCNRALLDMIEEKAMRTKEYECFVLKIQRLENLCRALQEERNELYRKIKQAQLPEEVNGNDILEEDDDANTNPSSSEQASIELCAADKNMLQELAEAFRVSHKAEETLPSDGSNPETCNVQMCEAISVPELPSHLTSQPEAGNHCEQFSMSTSAPPEHMPAATENMTTLIENMPKPTKSMPMPPEMVPTPTESVPIPTEGVPTPPKIMPATPESVPTLMQNTSAPLGNMPASTKSTPKAVEHVDDIAELFIPDQPAEQKGDTDMEAVD.

2 disordered regions span residues 1 to 55 (MEND…DISE) and 71 to 131 (AASL…EQKL). Composition is skewed to polar residues over residues 8–25 (EKQQ…QGQS) and 34–45 (QPLSPTNQTSAQ). A compositionally biased stretch (basic and acidic residues) spans 75-92 (VEKEGTTAETDKPEKEDV). The segment covering 93–105 (GSMEDAECEDVNE) has biased composition (acidic residues). Over residues 106–131 (ESEKDKPAPGDASRAKEPSASKEQKL) the composition is skewed to basic and acidic residues. The stretch at 157-461 (EEKLDLLFKK…LYRKIKQAQL (305 aa)) forms a coiled coil. The interval 464–486 (EVNGNDILEEDDDANTNPSSSEQ) is disordered.

It belongs to the taxilin family. Specifically expressed in skeletal and cardiac muscle.

The protein resides in the cytoplasm. In terms of biological role, promotes neurite-outgrowth. May be involved in intracellular vesicle traffic. This Gallus gallus (Chicken) protein is Beta-taxilin (TXLNB).